Here is a 622-residue protein sequence, read N- to C-terminus: Cilia- and flagella-associated protein 206 (622 aa).

The protein belongs to the CFAP206 family.

It is found in the cytoplasm. It localises to the cytoskeleton. Its subcellular location is the cilium axoneme. The protein localises to the cilium basal body. Its function is as follows. Essential for sperm motility and is involved in the regulation of the beating frequency of motile cilia on the epithelial cells of the respiratory tract. Required for the establishment of radial spokes in sperm flagella. The protein is Cilia- and flagella-associated protein 206 of Rattus norvegicus (Rat).